A 62-amino-acid chain; its full sequence is Large ribosomal subunit protein bL28 (62 aa).

It belongs to the bacterial ribosomal protein bL28 family.

This chain is Large ribosomal subunit protein bL28, found in Helicobacter acinonychis (strain Sheeba).